Reading from the N-terminus, the 589-residue chain is MDIVATTQKELYGWYAYAWAAEPFMVVAVATYIPQLLQSYARQNAVLADDHSQPCDSPPVPFPGDPGVPTDPGIPPNNSLSSSVPWFLRANEIQLLESPDTVHTMKDHKAKPTQPTCVIKFFGIYIDTASFPLYTFSLSVLLQVVVVISMSGAADRGRFRKQLLLFFGIAGALTTGLFVFITPKRYYLGSFLAIVSNAAFGAATVCGNAYLPVLAAGMKDGTTSEEPSEPSTPSDTSKPASRSENTPLLSASGVDYETGESSNTAEIVKIDHRANVSARISGTGVALGYLAGFIVQIISIYLVITTGSTTWSLRLALLIVGVWWLIFQIPVLMWLKPRPGPPLPIKTDPQNHPWTATLDRVTNGGWSYVTYGWKTLLVTFKEARQMKDVALFLVGWFLVSDGITTINSTAVLFAQGELRMSPANLAVMGMLVVISGISGAKLTPLIGGTRASPIKSIVVVVSLAAAVPAYGILGFFFTNIGLKNPWELYVLAVWYGFALGGLNTVCRSTFSMLIPRGKEAVFFSLFSVTDKGSSVLGPLLVGLIVDKTHNLRHAFYLLLVLLITPIGLFLMIDMERGRKEAEYLETVEE.

Residues 13–33 (GWYAYAWAAEPFMVVAVATYI) traverse the membrane as a helical segment. Residues 48–73 (ADDHSQPCDSPPVPFPGDPGVPTDPG) form a disordered region. Over residues 56–66 (DSPPVPFPGDP) the composition is skewed to pro residues. An N-linked (GlcNAc...) asparagine glycan is attached at N77. Helical transmembrane passes span 128-148 (TASF…VVVI), 163-183 (LLLF…FITP), and 187-207 (YLGS…TVCG). Positions 221 to 257 (GTTSEEPSEPSTPSDTSKPASRSENTPLLSASGVDYE) are disordered. Residues 235-249 (DTSKPASRSENTPLL) are compositionally biased toward polar residues. N275 carries an N-linked (GlcNAc...) asparagine glycan. A run of 8 helical transmembrane segments spans residues 284–304 (GVAL…YLVI), 315–335 (LALL…LMWL), 389–409 (VALF…INST), 426–446 (AVMG…TPLI), 457–477 (IVVV…GFFF), 486–506 (WELY…NTVC), 525–545 (LFSV…GLIV), and 554–574 (AFYL…MIDM).

This sequence belongs to the ATG22 family.

The protein resides in the vacuole membrane. Functionally, vacuolar effluxer which mediate the efflux of amino acids resulting from autophagic degradation. The release of autophagic amino acids allows the maintenance of protein synthesis and viability during nitrogen starvation. The polypeptide is Autophagy-related protein 22 (ATG22) (Yarrowia lipolytica (strain CLIB 122 / E 150) (Yeast)).